A 277-amino-acid polypeptide reads, in one-letter code: PHD finger protein ALFIN-LIKE 9 (277 aa).

2 disordered regions span residues Lys138–His206 and Pro255–Ser277. Residues Ser145–Thr160 show a composition bias toward low complexity. Residues Glu208–Gly260 form a PHD-type zinc finger. A compositionally biased stretch (gly residues) spans Gly259 to Asn270.

Belongs to the Alfin family. In terms of assembly, interacts with H3K4me3 and to a lesser extent with H3K4me2.

Its subcellular location is the nucleus. Functionally, histone-binding component that specifically recognizes H3 tails trimethylated on 'Lys-4' (H3K4me3), which mark transcription start sites of virtually all active genes. This Oryza sativa subsp. indica (Rice) protein is PHD finger protein ALFIN-LIKE 9.